Here is a 256-residue protein sequence, read N- to C-terminus: MNRIEQQFKKSPAYVAYLTAGDGGLERSLESLLALAKGGVNILEVGVPFSDPVADGPVIQEASIRALAQGTTLHDVLTLITSFRQHSEIPIILFTYFNPLLAAGDKIYQQMKSAGVDGCLVVDLPVEEAAPHLTACKTAKIAPILLISPSTTQERLKKINEHGEGMLYYVCRPGTTGVRATLPENFPAKMNQIKSMTSLPIVTGFGIANRKMAAQALQYADGFVIGSLFVKAIAEGISKNALTRLAQSLNPHYPNP.

Catalysis depends on proton acceptor residues E44 and D55.

Belongs to the TrpA family. In terms of assembly, tetramer of two alpha and two beta chains.

It catalyses the reaction (1S,2R)-1-C-(indol-3-yl)glycerol 3-phosphate + L-serine = D-glyceraldehyde 3-phosphate + L-tryptophan + H2O. Its pathway is amino-acid biosynthesis; L-tryptophan biosynthesis; L-tryptophan from chorismate: step 5/5. In terms of biological role, the alpha subunit is responsible for the aldol cleavage of indoleglycerol phosphate to indole and glyceraldehyde 3-phosphate. The protein is Tryptophan synthase alpha chain of Coxiella burnetii (strain CbuK_Q154) (Coxiella burnetii (strain Q154)).